Reading from the N-terminus, the 201-residue chain is Recombination protein RecR (201 aa).

The C4-type zinc-finger motif lies at 60–75 (CSVCGNIDTTDPCSIC). Residues 83–178 (GTIIVVEDIS…KITRLAHGVP (96 aa)) form the Toprim domain.

The protein belongs to the RecR family.

In terms of biological role, may play a role in DNA repair. It seems to be involved in an RecBC-independent recombinational process of DNA repair. It may act with RecF and RecO. The chain is Recombination protein RecR from Bartonella bacilliformis (strain ATCC 35685 / KC583 / Herrer 020/F12,63).